Here is a 226-residue protein sequence, read N- to C-terminus: V-type proton ATPase subunit E (226 aa).

This sequence belongs to the V-ATPase E subunit family. In terms of assembly, V-ATPase is a heteromultimeric enzyme made up of two complexes: the ATP-hydrolytic V1 complex and the proton translocation V0 complex. The V1 complex consists of three catalytic AB heterodimers that form a heterohexamer, three peripheral stalks each consisting of EG heterodimers, one central rotor including subunits D and F, and the regulatory subunits C and H. The proton translocation complex V0 consists of the proton transport subunit a, a ring of proteolipid subunits c9c'', rotary subunit d, subunits e and f, and the accessory subunits VhaAC45 and ATP6AP2.

In terms of biological role, subunit of the V1 complex of vacuolar(H+)-ATPase (V-ATPase), a multisubunit enzyme composed of a peripheral complex (V1) that hydrolyzes ATP and a membrane integral complex (V0) that translocates protons. V-ATPase is responsible for acidifying and maintaining the pH of intracellular compartments and in some cell types, is targeted to the plasma membrane, where it is responsible for acidifying the extracellular environment. In Manduca sexta (Tobacco hawkmoth), this protein is V-type proton ATPase subunit E (VHA26).